Here is a 481-residue protein sequence, read N- to C-terminus: Serine/threonine-protein kinase US3 (481 aa).

Residues 12 to 63 (GQGRRKEEAVPPETKPSRVFPHGPFYTPAEDACLDSPPPETPKPSHTTPPSE) are disordered. The Protein kinase domain occupies 191–478 (FTIHGALTPG…AAELLCLPLF (288 aa)). Residues 197-205 (LTPGSEGCV) and Lys220 each bind ATP. Asp305 acts as the Proton acceptor in catalysis.

The protein belongs to the protein kinase superfamily. Ser/Thr protein kinase family. In terms of assembly, interacts with host LAT; this interaction prevents LAT activation of TRAF6. In terms of processing, phosphorylated by UL13; this phosphorylation regulates subsequent phosphorylation of UL31 and UL34 by US3. Autophosphorylated.

It localises to the host cytoplasm. It is found in the host nucleus. The enzyme catalyses L-seryl-[protein] + ATP = O-phospho-L-seryl-[protein] + ADP + H(+). It catalyses the reaction L-threonyl-[protein] + ATP = O-phospho-L-threonyl-[protein] + ADP + H(+). Functionally, multifunctional serine/threonine kinase that plays a role in several processes including egress of virus particles from the nucleus, modulation of the actin cytoskeleton and inhibition of host immune response. Phosphorylates UL31 and UL34, two critical regulators of capsid budding from nucleus to endoplasmic reticulum, thereby facilitating virion egress. Modulates and redistributes host components of the nuclear envelope, including LMNA, emerin/EMD and the nuclear matrix protein MATR3. In turn, facilitates nuclear pore impairment and capsid release through impaired nuclear envelope. Phosphorylates envelope glycoprotein B (gB), probably to direct it to the cell surface. Promotes virus intracellular spread by restructuring host cell cytoskeleton. Blocks host apoptosis to extend cell survival and allow efficient viral replication. Promotes viral gene expression by phosphorylating host HDAC2 to reduce viral genome silencing. Strongly inhibits TCR-activated signal transduction in T-cells by reducing the ubiquitination of LAT and TRAF6, leading to a suboptimal activation of LAT. Subverts host antiviral innate immunity by inhibiting type I interferon production through hyperphosphorylation of beta-catenin/CTNNB1. In addition, phosphorylates the RNA sensor RIGI and the transcription factor IRF3 to prevent the RLR-mediated antiviral signaling pathway. Hyperphosphorylates host RELA and thereby dampens NF-kappa-B signaling. Acts as an immunoevasin partly responsible for inhibition of MR1 expression and antigen presentation in response to bacterial infection. This Human herpesvirus 1 (strain 17) (HHV-1) protein is Serine/threonine-protein kinase US3 (US3).